The primary structure comprises 276 residues: Rhomboid protease GlpG (276 aa).

Transmembrane regions (helical) follow at residues 94 to 114, 142 to 162, 169 to 189, 192 to 212, 229 to 249, and 250 to 270; these read GPVT…MQIL, ALMH…WYLG, LGSG…GYVQ, FSGP…GYVW, LIIF…GMSM, and ANGA…VDSL. Ser-201 functions as the Nucleophile in the catalytic mechanism. The active site involves His-254.

Belongs to the peptidase S54 family.

Its subcellular location is the cell inner membrane. The enzyme catalyses Cleaves type-1 transmembrane domains using a catalytic dyad composed of serine and histidine that are contributed by different transmembrane domains.. Functionally, rhomboid-type serine protease that catalyzes intramembrane proteolysis. This is Rhomboid protease GlpG from Shigella boydii serotype 4 (strain Sb227).